The following is a 101-amino-acid chain: Small ribosomal subunit protein uS14 (101 aa).

This sequence belongs to the universal ribosomal protein uS14 family. In terms of assembly, part of the 30S ribosomal subunit. Contacts proteins S3 and S10.

Its function is as follows. Binds 16S rRNA, required for the assembly of 30S particles and may also be responsible for determining the conformation of the 16S rRNA at the A site. The protein is Small ribosomal subunit protein uS14 of Shewanella sp. (strain MR-4).